The sequence spans 289 residues: Phospholipase A1 (289 aa).

A signal peptide spans 1-20 (MRTGPGWLLAAAALPFFACA). The Periplasmic portion of the chain corresponds to 21-52 (QEATIDKVHDTPAVRGSIIANMLQEHDNPFTL). Residues 53–65 (YPYESNYLLYTYT) traverse the membrane as a beta stranded segment. At 66 to 84 (SDLNKKAIESYNWSDNANK) the chain is on the extracellular side. Residues 85 to 99 (DEVKFQLSLAFPLWR) form a beta stranded membrane-spanning segment. Residues 100–105 (GILGDN) are Periplasmic-facing. A beta stranded transmembrane segment spans residues 106–118 (SLLGASYTQRSWW). Topologically, residues 119 to 128 (QLSNTGESAP) are extracellular. Serine 126 serves as a coordination point for Ca(2+). A beta stranded transmembrane segment spans residues 129–148 (FRETNYEPQLFLGFATDYSV). Residues 149-150 (GD) are Periplasmic-facing. Residues 151-164 (WTLRDAEFGYNHQS) form a beta stranded membrane-spanning segment. Histidine 162 serves as the catalytic Proton acceptor. Serine 164 acts as the Nucleophile in catalysis. The Extracellular segment spans residues 165 to 173 (NGRSDPTSR). Ca(2+) contacts are provided by arginine 167 and serine 172. The beta stranded transmembrane segment at 174–186 (SWNRLYSRLMAQN) threads the bilayer. Residues 187–188 (GN) are Periplasmic-facing. Residues 189–198 (WLVEVKPWYV) traverse the membrane as a beta stranded segment. Topologically, residues 199–216 (IGDTSDNKNITKYMGYYQ) are extracellular. Residue aspartate 204 coordinates Ca(2+). A beta stranded transmembrane segment spans residues 217–223 (LKIGYQL). Residues 224–225 (GE) are Periplasmic-facing. A beta stranded membrane pass occupies residues 226-234 (AVLSAKGQY). Residues 235 to 241 (NWNTGYG) are Extracellular-facing. A beta stranded membrane pass occupies residues 242 to 250 (GAELGVSYP). Over 251–255 (ITKHV) the chain is Periplasmic. The beta stranded transmembrane segment at 256–265 (RFYTQVYSGY) threads the bilayer. At 266-274 (GESLIDYDF) the chain is on the extracellular side. A beta stranded membrane pass occupies residues 275–286 (NQTRVGMGVMLN). At 287-289 (DLF) the chain is on the periplasmic side.

Belongs to the phospholipase A1 family. As to quaternary structure, homodimer; dimerization is reversible, and the dimeric form is the active one. The cofactor is Ca(2+).

The protein resides in the cell outer membrane. The catalysed reaction is a 1,2-diacyl-sn-glycero-3-phosphocholine + H2O = a 2-acyl-sn-glycero-3-phosphocholine + a fatty acid + H(+). It catalyses the reaction a 1,2-diacyl-sn-glycero-3-phosphocholine + H2O = a 1-acyl-sn-glycero-3-phosphocholine + a fatty acid + H(+). In terms of biological role, hydrolysis of phosphatidylcholine with phospholipase A2 (EC 3.1.1.4) and phospholipase A1 (EC 3.1.1.32) activities. The protein is Phospholipase A1 (pldA) of Proteus vulgaris.